The primary structure comprises 262 residues: Shikimate dehydrogenase (NADP(+)) (262 aa).

Shikimate-binding positions include 15 to 17 and Thr62; that span reads SRS. Residue Lys66 is the Proton acceptor of the active site. NADP(+) is bound at residue Glu78. Positions 87 and 102 each coordinate shikimate. NADP(+)-binding positions include 126 to 130, 150 to 155, and Met214; these read GAGGA and NRTLAR. Tyr216 provides a ligand contact to shikimate. Residue Gly236 coordinates NADP(+).

It belongs to the shikimate dehydrogenase family. As to quaternary structure, homodimer.

It carries out the reaction shikimate + NADP(+) = 3-dehydroshikimate + NADPH + H(+). It participates in metabolic intermediate biosynthesis; chorismate biosynthesis; chorismate from D-erythrose 4-phosphate and phosphoenolpyruvate: step 4/7. In terms of biological role, involved in the biosynthesis of the chorismate, which leads to the biosynthesis of aromatic amino acids. Catalyzes the reversible NADPH linked reduction of 3-dehydroshikimate (DHSA) to yield shikimate (SA). This is Shikimate dehydrogenase (NADP(+)) from Acinetobacter baumannii (strain AB307-0294).